The primary structure comprises 329 residues: 4-methyl-2-oxopentanoate reductase A (329 aa).

NAD(+)-binding positions include 162–163 (GI), 240–242 (TAR), and D266. The active site involves R242. The active site involves E271. Residue H289 is the Proton donor of the active site.

The protein belongs to the D-isomer specific 2-hydroxyacid dehydrogenase family.

The enzyme catalyses (2R)-hydroxy-4-methylpentanoate + NADP(+) = 4-methyl-2-oxopentanoate + NADPH + H(+). The catalysed reaction is a (2R)-2-hydroxycarboxylate + NADP(+) = a 2-oxocarboxylate + NADPH + H(+). Functionally, 4-methyl-2-oxopentanoate (MOA) reductase that reduces MOA, a possible intermediate in leucine synthesis, to D-leucate in a NADPH- or NADH-dependent manner, but with a preference for NADPH. In addition to MOA, shows broad substrate specificity toward 2-keto acids. This chain is 4-methyl-2-oxopentanoate reductase A, found in Aspergillus oryzae (strain ATCC 42149 / RIB 40) (Yellow koji mold).